The following is a 421-amino-acid chain: MLNASPLQTLDPQVFSAISEELARQQSHIELIASENFTYPAVMEAQGSVLTNKYAEGYPAKRWYGGCEFVDKVEVLAIERAKKLFGAEHANVQPHSGAQANTAVYAAVLQPGDKVLGMNLSHGGHLTHGNPANFSGKLYQFCQYGVREDNGLIDYDELAATADREKPKMITVGASAYSRIIDFARMGEIARGVGAYLFADIAHIAGLVAAGAHPSPVPHADFVSTTTHKTLRGPRGGLVLCKAAHAKALDSAVFPGTQGGPLMHIIAAKAVCFGECLKPEFKAYSEQIVKNSKALAAAFLSRGYKIVSGGTDNHLFLVDLRTKYPELTAKKAQETLDLANITCNKNTVPFETRSPFQASGIRLGTPAVTTRGFREAHMADIADCIDSVLAAIGTEREAVVVAATKKRVTTLTSRFPLPYQL.

(6S)-5,6,7,8-tetrahydrofolate-binding positions include Leu-120 and 124-126; that span reads GHL. An N6-(pyridoxal phosphate)lysine modification is found at Lys-229. 354-356 is a binding site for (6S)-5,6,7,8-tetrahydrofolate; it reads SPF.

Belongs to the SHMT family. In terms of assembly, homodimer. Requires pyridoxal 5'-phosphate as cofactor.

It is found in the cytoplasm. It carries out the reaction (6R)-5,10-methylene-5,6,7,8-tetrahydrofolate + glycine + H2O = (6S)-5,6,7,8-tetrahydrofolate + L-serine. Its pathway is one-carbon metabolism; tetrahydrofolate interconversion. It functions in the pathway amino-acid biosynthesis; glycine biosynthesis; glycine from L-serine: step 1/1. Its function is as follows. Catalyzes the reversible interconversion of serine and glycine with tetrahydrofolate (THF) serving as the one-carbon carrier. This reaction serves as the major source of one-carbon groups required for the biosynthesis of purines, thymidylate, methionine, and other important biomolecules. Also exhibits THF-independent aldolase activity toward beta-hydroxyamino acids, producing glycine and aldehydes, via a retro-aldol mechanism. The protein is Serine hydroxymethyltransferase of Opitutus terrae (strain DSM 11246 / JCM 15787 / PB90-1).